The following is a 670-amino-acid chain: DUF724 domain-containing protein 1 (670 aa).

Disordered stretches follow at residues 283–315 (HNGP…PMTP) and 368–445 (ANAE…NNDD). Polar residues-rich tracts occupy residues 294 to 309 (SPSN…SSSG), 379 to 392 (RNQN…TQQM), and 426 to 442 (CNGS…SICN). One can recognise a DUF724 domain in the interval 484–669 (PFAKKLPFWK…LEFQTTVSTP (186 aa)).

In terms of tissue distribution, expressed in stems and flowers.

The protein resides in the nucleus. May be involved in the polar growth of plant cells via transportation of RNAs. The sequence is that of DUF724 domain-containing protein 1 from Arabidopsis thaliana (Mouse-ear cress).